The chain runs to 520 residues: AarF domain-containing protein kinase 1 (520 aa).

Residues 148–455 (EFEKTPLGAA…GTHSSSSAFF (308 aa)) enclose the Protein kinase domain. ATP-binding positions include 154–162 (LGAASLAQV) and K176. D308 (proton acceptor) is an active-site residue.

The protein belongs to the protein kinase superfamily. ADCK protein kinase family.

The protein localises to the mitochondrion. Its function is as follows. Appears to be essential for maintaining mitochondrial cristae formation and mitochondrial function by acting via YME1L1 in a kinase-independent manner to regulate essential mitochondrial structural proteins OPA1 and IMMT. The action of this enzyme is not yet clear. It is not known if it has protein kinase activity and what type of substrate it would phosphorylate (Ser, Thr or Tyr). The sequence is that of AarF domain-containing protein kinase 1 (adck1) from Xenopus laevis (African clawed frog).